The primary structure comprises 152 residues: 17.1 kDa class II heat shock protein (152 aa).

A sHSP domain is found at aspartate 36–alanine 152.

Belongs to the small heat shock protein (HSP20) family.

Its subcellular location is the cytoplasm. The polypeptide is 17.1 kDa class II heat shock protein (HSP17.7) (Pisum sativum (Garden pea)).